The chain runs to 214 residues: uncharacterized protein (214 aa).

A signal peptide spans 1–17 (MWCFIVFLTIFLPTLEG). 2 N-linked (GlcNAc...) asparagine glycosylation sites follow: Asn88 and Asn139.

As to expression, component of the acid-insoluble organic matrix of calcified layers of the shell (at protein level).

The protein resides in the secreted. This is an uncharacterized protein from Lottia gigantea (Giant owl limpet).